The following is a 65-amino-acid chain: UPF0434 protein BH12860 (65 aa).

The protein belongs to the UPF0434 family.

The polypeptide is UPF0434 protein BH12860 (Bartonella henselae (strain ATCC 49882 / DSM 28221 / CCUG 30454 / Houston 1) (Rochalimaea henselae)).